The following is a 427-amino-acid chain: Vitamin D3 receptor (427 aa).

Positions 21–96 form a DNA-binding region, nuclear receptor; it reads PRICGVCGDR…IGMMKEFILT (76 aa). Zn(2+) is bound by residues Cys-24, Cys-27, Cys-41, Cys-44, Cys-60, Cys-66, Cys-76, and Cys-79. NR C4-type zinc fingers lie at residues 24–44 and 60–84; these read CGVC…CEGC and CPFN…LKRC. Residues 97-126 are hinge; sequence DEEVQRKREMILKRKEEEALKDSLRPKLSE. The region spanning 127–423 is the NR LBD domain; that stretch reads EQQRIIAILL…LTPLVLEVFG (297 aa). Tyr-143 serves as a coordination point for calcitriol. Positions 158-183 are disordered; sequence RVNDGGGSHPSRPNSRHTPSFSGDSS. A calcitriol-binding site is contributed by Ser-237. Residues 246–264 form an interaction with coactivator LXXLL motif region; that stretch reads KMIPGFRDLTSEDQIVLLK. Calcitriol-binding residues include Arg-274, Ser-278, His-305, and His-397. The 9aaTAD signature appears at 416 to 424; sequence PLVLEVFGN.

Belongs to the nuclear hormone receptor family. NR1 subfamily. As to quaternary structure, homodimer in the absence of bound vitamin D3. Heterodimer with RXRA after vitamin D3 binding. Interacts with MED1, NCOA1, NCOA2, NCOA3 and NCOA6 coactivators, leading to a strong increase of transcription of target genes. Interacts with the corepressor NCOR1. Interacts with SNW1. Interacts with IRX4, the interaction does not affect its transactivation activity. Ubiquitinated by UBR5, leading to its degradation: UBR5 specifically recognizes and binds ligand-bound VDR when it is not associated with coactivators (NCOAs). In presence of NCOAs, the UBR5-degron is not accessible, preventing its ubiquitination and degradation.

Its subcellular location is the nucleus. The protein resides in the cytoplasm. In terms of biological role, nuclear receptor for calcitriol, the active form of vitamin D3 which mediates the action of this vitamin on cells. Enters the nucleus upon vitamin D3 binding where it forms heterodimers with the retinoid X receptor/RXR. The VDR-RXR heterodimers bind to specific response elements on DNA and activate the transcription of vitamin D3-responsive target genes. Plays a central role in calcium homeostasis. The polypeptide is Vitamin D3 receptor (VDR) (Saguinus oedipus (Cotton-top tamarin)).